We begin with the raw amino-acid sequence, 304 residues long: Small ribosomal subunit biogenesis GTPase RsgA (304 aa).

One can recognise a CP-type G domain in the interval 70–229 (HNELNRPNIA…IADTPGFSKL (160 aa)). GTP-binding positions include 119 to 122 (TKID) and 172 to 180 (GQTGVGKST). The Zn(2+) site is built by Cys-253, Cys-259, His-261, and Cys-267.

Belongs to the TRAFAC class YlqF/YawG GTPase family. RsgA subfamily. Monomer. Associates with 30S ribosomal subunit, binds 16S rRNA. It depends on Zn(2+) as a cofactor.

It is found in the cytoplasm. Its function is as follows. One of several proteins that assist in the late maturation steps of the functional core of the 30S ribosomal subunit. Helps release RbfA from mature subunits. May play a role in the assembly of ribosomal proteins into the subunit. Circularly permuted GTPase that catalyzes slow GTP hydrolysis, GTPase activity is stimulated by the 30S ribosomal subunit. The protein is Small ribosomal subunit biogenesis GTPase RsgA of Phytoplasma mali (strain AT).